The following is a 1178-amino-acid chain: Pyruvate carboxylase, mitochondrial (1178 aa).

A mitochondrion-targeting transit peptide spans Met-1 to Ser-20. N6-acetyllysine is present on residues Lys-35 and Lys-39. The Biotin carboxylation domain maps to Pro-36–Glu-486. Lys-79 is modified (N6-acetyllysine; alternate). Lys-79 bears the N6-succinyllysine; alternate mark. N6-acetyllysine is present on residues Lys-148 and Lys-152. ATP-binding residues include Lys-152 and Glu-236. Positions Arg-156–Glu-353 constitute an ATP-grasp domain. An N6-acetyllysine modification is found at Lys-241. ATP is bound at residue His-271. An N6-acetyllysine mark is found at Lys-297 and Lys-319. Residue Arg-328 is part of the active site. The residue at position 434 (Lys-434) is an N6-acetyllysine. Lys-442 carries the N6-succinyllysine modification. The 270-residue stretch at Leu-563–Phe-832 folds into the Pyruvate carboxyltransferase domain. Arg-571–Gln-575 is a binding site for substrate. Mn(2+) is bound at residue Asp-572. Lys-589 bears the N6-acetyllysine mark. Position 644 (Arg-644) interacts with substrate. 2 positions are modified to N6-acetyllysine: Lys-661 and Lys-717. Lys-741 is a binding site for Mn(2+). N6-carboxylysine is present on Lys-741. Residue Lys-748 is modified to N6-acetyllysine. Residues His-771 and His-773 each coordinate Mn(2+). N6-acetyllysine is present on Lys-892. A substrate-binding site is contributed by Thr-908. 2 positions are modified to N6-acetyllysine: Lys-969 and Lys-992. Thr-1003 bears the Phosphothreonine mark. Residues Lys-1061, Lys-1090, and Lys-1124 each carry the N6-acetyllysine modification. Residues Lys-1109–Glu-1178 enclose the Biotinyl-binding domain. At Lys-1144 the chain carries N6-biotinyllysine.

Homotetramer. Interacts (via the biotin carboxylation domain) with SIRT4. Biotin is required as a cofactor. The cofactor is Mn(2+). Acetylation of Lys-748 might play a role in catalytic activity regulation.

The protein resides in the mitochondrion matrix. It catalyses the reaction hydrogencarbonate + pyruvate + ATP = oxaloacetate + ADP + phosphate + H(+). It functions in the pathway carbohydrate biosynthesis; gluconeogenesis. Its function is as follows. Pyruvate carboxylase catalyzes a 2-step reaction, involving the ATP-dependent carboxylation of the covalently attached biotin in the first step and the transfer of the carboxyl group to pyruvate in the second. Catalyzes in a tissue specific manner, the initial reactions of glucose (liver, kidney) and lipid (adipose tissue, liver, brain) synthesis from pyruvate. The sequence is that of Pyruvate carboxylase, mitochondrial from Homo sapiens (Human).